Here is a 221-residue protein sequence, read N- to C-terminus: 2-amino-5-formylamino-6-ribosylaminopyrimidin-4(3H)-one 5'-monophosphate deformylase (221 aa).

Residues Glu29, His31, Asp40, and His108 each contribute to the Fe cation site.

It belongs to the creatininase superfamily. FAPy deformylase family. As to quaternary structure, homodimer. Requires Fe(2+) as cofactor. Zn(2+) serves as cofactor.

It carries out the reaction 2-amino-5-formylamino-6-(5-phospho-D-ribosylamino)pyrimidin-4(3H)-one + H2O = 2,5-diamino-6-(1-D-ribosylamino)pyrimidin-4(3H)-one 5'-phosphate + formate + H(+). The protein operates within cofactor biosynthesis; coenzyme F420 biosynthesis. It participates in cofactor biosynthesis; riboflavin biosynthesis. In terms of biological role, catalyzes the hydrolysis of the formamide of 2-amino-5-formylamino-6-ribosylamino-4(3H)-pyrimidinone 5'-monophosphate (FAPy) to form 2,5-diamino-6-ribosylamino-4(3H)-pyrimidinone 5'-phosphate (APy). In Methanococcus maripaludis (strain DSM 14266 / JCM 13030 / NBRC 101832 / S2 / LL), this protein is 2-amino-5-formylamino-6-ribosylaminopyrimidin-4(3H)-one 5'-monophosphate deformylase.